The sequence spans 72 residues: UPF0729 protein C18orf32 homolog (72 aa).

The necessary for its localzation to the endoplasmic reticulum and lipid droplets stretch occupies residues M1–P33. Residues T45–D72 form a disordered region.

It belongs to the UPF0729 family. Interacts with DERL1 and AMFR. In terms of processing, undergoes ER-associated degradation (ERAD).

It localises to the endoplasmic reticulum. The protein localises to the lipid droplet. Its function is as follows. May activate the NF-kappa-B signaling pathway. The sequence is that of UPF0729 protein C18orf32 homolog from Rattus norvegicus (Rat).